The primary structure comprises 210 residues: MKTNHPKHIPITQIKKQLLSSLDKRALVLVGLMGAGKSVIGKRIATMLGLPFYDSDQEIEKAAQMTITEFFKVYGESEFRALEQHVTLSLMKKSPLVLATGGGAYINEDIRQVINKNGISIWLKADLDILMKRVSRHPTRPLLQTANPKETMKKLMEQRYPIYAKANLTINSYKESRHTVAQNVIRSVQNYIYTEINDRNNQHANQDRHC.

Position 34–39 (34–39 (GAGKSV)) interacts with ATP. Ser38 is a binding site for Mg(2+). Asp56, Arg80, and Gly102 together coordinate substrate. Arg140 is an ATP binding site. Arg159 is a substrate binding site.

Belongs to the shikimate kinase family. In terms of assembly, monomer. It depends on Mg(2+) as a cofactor.

The protein resides in the cytoplasm. The enzyme catalyses shikimate + ATP = 3-phosphoshikimate + ADP + H(+). It participates in metabolic intermediate biosynthesis; chorismate biosynthesis; chorismate from D-erythrose 4-phosphate and phosphoenolpyruvate: step 5/7. Its function is as follows. Catalyzes the specific phosphorylation of the 3-hydroxyl group of shikimic acid using ATP as a cosubstrate. This is Shikimate kinase from Bartonella quintana (strain Toulouse) (Rochalimaea quintana).